A 1408-amino-acid chain; its full sequence is DNA-directed RNA polymerase subunit beta' (1408 aa).

Residues cysteine 70, cysteine 72, cysteine 85, and cysteine 88 each contribute to the Zn(2+) site. Mg(2+) is bound by residues aspartate 460, aspartate 462, and aspartate 464. Zn(2+) is bound by residues cysteine 822, cysteine 896, cysteine 903, and cysteine 906. Positions 1386 to 1408 (DTGEAPPLSEEETGEIRNSGYAV) are disordered.

The protein belongs to the RNA polymerase beta' chain family. The RNAP catalytic core consists of 2 alpha, 1 beta, 1 beta' and 1 omega subunit. When a sigma factor is associated with the core the holoenzyme is formed, which can initiate transcription. It depends on Mg(2+) as a cofactor. The cofactor is Zn(2+).

The catalysed reaction is RNA(n) + a ribonucleoside 5'-triphosphate = RNA(n+1) + diphosphate. In terms of biological role, DNA-dependent RNA polymerase catalyzes the transcription of DNA into RNA using the four ribonucleoside triphosphates as substrates. In Nitrosospira multiformis (strain ATCC 25196 / NCIMB 11849 / C 71), this protein is DNA-directed RNA polymerase subunit beta'.